Consider the following 249-residue polypeptide: Vesicle-associated membrane protein-associated protein A (249 aa).

Residue Ala-2 is modified to N-acetylalanine. The Cytoplasmic segment spans residues 2-227 (ASASGTMAKH…VSFRENVTSP (226 aa)). Residues 14–131 (ILVLDPPTDL…MDSKLRCVFE (118 aa)) enclose the MSP domain. The phosphorylated FFAT motif binding stretch occupies residues 50–53 (KVKT). Lys-125 carries the post-translational modification N6-acetyllysine. Ser-166 carries the phosphoserine modification. The stretch at 169–205 (DTETRKLVEECKRLQGEMMKLSEENRLLRDEGLRLRK) forms a coiled coil. Thr-170 is subject to Phosphothreonine. Residues Ser-214, Ser-216, and Ser-219 each carry the phosphoserine modification. Residues 228 to 248 (LPSLLVVIAAIFIGFFLGKFI) traverse the membrane as a helical; Anchor for type IV membrane protein segment.

It belongs to the VAMP-associated protein (VAP) (TC 9.B.17) family. Homodimer; disulfide-linked. Heterodimer with VAPB. Interacts with VAMP1, VAMP2, STX1A, BET1, SEC22C and with the C-terminal domain of OCLN. Interacts (via MSP domain) with OSBPL1A (via FFAT motif). Interacts (via MSP domain) with ZFYVE27; may retain ZFYVE27 in the endoplasmic reticulum and regulate its function in cell projections formation. Interacts with OSBP. Interacts (via C-terminus) with RSAD2/viperin (via C-terminus). Interacts with IFITM3. Interacts with OSBPL3 (phosphorylated form). Interacts with KIF5A in a ZFYVE27-dependent manner. Interacts (via MSP domain) with STARD3 (via phosphorylated FFAT motif); this interaction recruits VAPA to the endosome. Interacts with STARD3NL (via FFAT motif). Interacts with CERT1. Interacts with PLEKHA3 and SACM1L to form a ternary complex. Interacts with VPS13A (via FFAT motif). Interacts with RB1CC1 (via phosphorylated FFAT motif), MIGA2 (via phosphorylated FFAT motif), RMDN3 (via phosphorylated FFAT motif), KCNB1 (via phosphorylated FFAT motif) and KCNB2 (via phosphorylated FFAT motif). Interacts (via MSP domain) with WDR44 (via FFAT-like motif); the interactions connect the endoplasmic reticulum (ER) with the endosomal tubule.

Its subcellular location is the endoplasmic reticulum membrane. The protein resides in the cell junction. It is found in the tight junction. It localises to the cell membrane. In terms of biological role, endoplasmic reticulum (ER)-anchored protein that mediates the formation of contact sites between the ER and endosomes via interaction with FFAT motif-containing proteins such as STARD3 or WDR44. STARD3-VAPA interaction enables cholesterol transfer from the ER to endosomes. Via interaction with WDR44 participates in neosynthesized protein export. In addition, recruited to the plasma membrane through OSBPL3 binding. The OSBPL3-VAPA complex stimulates RRAS signaling which in turn attenuates integrin beta-1 (ITGB1) activation at the cell surface. With OSBPL3, may regulate ER morphology. May play a role in vesicle trafficking. This Bos taurus (Bovine) protein is Vesicle-associated membrane protein-associated protein A.